Consider the following 442-residue polypeptide: tRNA-2-methylthio-N(6)-dimethylallyladenosine synthase (442 aa).

One can recognise an MTTase N-terminal domain in the interval 3–120; that stretch reads KKLYIETHGC…LPEMIDAARI (118 aa). [4Fe-4S] cluster contacts are provided by C12, C49, C83, C157, C161, and C164. The region spanning 143-375 is the Radical SAM core domain; sequence RVDGPSAYVS…QHRLNQQGFE (233 aa). The TRAM domain maps to 378–442; that stretch reads RQMVGSIQRI…PHSLRGSLLQ (65 aa).

The protein belongs to the methylthiotransferase family. MiaB subfamily. Monomer. Requires [4Fe-4S] cluster as cofactor.

The protein resides in the cytoplasm. It catalyses the reaction N(6)-dimethylallyladenosine(37) in tRNA + (sulfur carrier)-SH + AH2 + 2 S-adenosyl-L-methionine = 2-methylsulfanyl-N(6)-dimethylallyladenosine(37) in tRNA + (sulfur carrier)-H + 5'-deoxyadenosine + L-methionine + A + S-adenosyl-L-homocysteine + 2 H(+). In terms of biological role, catalyzes the methylthiolation of N6-(dimethylallyl)adenosine (i(6)A), leading to the formation of 2-methylthio-N6-(dimethylallyl)adenosine (ms(2)i(6)A) at position 37 in tRNAs that read codons beginning with uridine. The sequence is that of tRNA-2-methylthio-N(6)-dimethylallyladenosine synthase from Pseudomonas savastanoi pv. phaseolicola (strain 1448A / Race 6) (Pseudomonas syringae pv. phaseolicola (strain 1448A / Race 6)).